The chain runs to 46 residues: Protein PsbN (46 aa).

Residues 10–30 traverse the membrane as a helical segment; the sequence is LAIIVLVVLLGLTGLGVYMAF.

It belongs to the PsbN family.

It is found in the cellular thylakoid membrane. Its function is as follows. May play a role in photosystem I and II biogenesis. This Prochlorococcus marinus (strain MIT 9211) protein is Protein PsbN.